The following is a 572-amino-acid chain: Proline--tRNA ligase (572 aa).

The protein belongs to the class-II aminoacyl-tRNA synthetase family. ProS type 1 subfamily. In terms of assembly, homodimer.

It localises to the cytoplasm. The enzyme catalyses tRNA(Pro) + L-proline + ATP = L-prolyl-tRNA(Pro) + AMP + diphosphate. Its function is as follows. Catalyzes the attachment of proline to tRNA(Pro) in a two-step reaction: proline is first activated by ATP to form Pro-AMP and then transferred to the acceptor end of tRNA(Pro). As ProRS can inadvertently accommodate and process non-cognate amino acids such as alanine and cysteine, to avoid such errors it has two additional distinct editing activities against alanine. One activity is designated as 'pretransfer' editing and involves the tRNA(Pro)-independent hydrolysis of activated Ala-AMP. The other activity is designated 'posttransfer' editing and involves deacylation of mischarged Ala-tRNA(Pro). The misacylated Cys-tRNA(Pro) is not edited by ProRS. This chain is Proline--tRNA ligase, found in Enterococcus faecalis (strain ATCC 700802 / V583).